Here is a 310-residue protein sequence, read N- to C-terminus: Translocator protein BipD (310 aa).

Coiled-coil stretches lie at residues 127–171 (DPIL…LQDY) and 250–299 (DTAR…AIST).

This sequence belongs to the invasin protein D family.

The protein localises to the secreted. Functionally, required for invasion of epithelial cells, as well as for survival within host cells, escape from endocytic vesicles and subsequent actin-tail formation. Probably regulates the secretion of effectors BipB and BipC and their final integration into the target cell membrane. This is Translocator protein BipD (bipD) from Burkholderia thailandensis (strain ATCC 700388 / DSM 13276 / CCUG 48851 / CIP 106301 / E264).